A 277-amino-acid polypeptide reads, in one-letter code: Thiazole synthase (277 aa).

Residue K119 is the Schiff-base intermediate with DXP of the active site. 1-deoxy-D-xylulose 5-phosphate contacts are provided by residues G180, 206–207 (AG), and 228–229 (NT).

It belongs to the ThiG family. Homotetramer. Forms heterodimers with either ThiH or ThiS.

Its subcellular location is the plastid. It is found in the chloroplast. It catalyses the reaction [ThiS sulfur-carrier protein]-C-terminal-Gly-aminoethanethioate + 2-iminoacetate + 1-deoxy-D-xylulose 5-phosphate = [ThiS sulfur-carrier protein]-C-terminal Gly-Gly + 2-[(2R,5Z)-2-carboxy-4-methylthiazol-5(2H)-ylidene]ethyl phosphate + 2 H2O + H(+). The protein operates within cofactor biosynthesis; thiamine diphosphate biosynthesis. Its function is as follows. Catalyzes the rearrangement of 1-deoxy-D-xylulose 5-phosphate (DXP) to produce the thiazole phosphate moiety of thiamine. Sulfur is provided by the thiocarboxylate moiety of the carrier protein ThiS. In vitro, sulfur can be provided by H(2)S. The protein is Thiazole synthase of Pyropia yezoensis (Susabi-nori).